The following is a 373-amino-acid chain: Transcription factor NF-E2 45 kDa subunit (373 aa).

2 disordered regions span residues 1 to 22 and 40 to 60; these read MPPC…GELG and LNVP…PGPL. Residues 1-83 form a required for interaction with MAPK8 region; sequence MPPCPPQPNR…AGFTLPPPPY (83 aa). The tract at residues 1-206 is transactivation domain; that stretch reads MPPCPPQPNR…PPTETPLVLE (206 aa). 2 consecutive short sequence motifs (PXY motif) follow at residues 61–65 and 79–83; these read PPPTY and PPPPY. The segment at 131-163 is disordered; sequence LPVGQPKPQEDPESDSGLSLNYSDAESLELEGT. Residue serine 157 is modified to Phosphoserine; by MAPK8. Residue serine 170 is modified to Phosphoserine; by PKA. The disordered stretch occupies residues 206-225; the sequence is ESSSGPVRAKPAVRGEAGSR. Residues 266–329 form the bZIP domain; it reads LVRDIRRRGK…EVMRQQLTEL (64 aa). A basic motif region spans residues 268 to 287; the sequence is RDIRRRGKNKVAAQNCRKRK. The tract at residues 291 to 298 is leucine-zipper; the sequence is IVQLEREL. A Glycyl lysine isopeptide (Lys-Gly) (interchain with G-Cter in SUMO); alternate cross-link involves residue lysine 368. Lysine 368 is covalently cross-linked (Glycyl lysine isopeptide (Lys-Gly) (interchain with G-Cter in SUMO1); alternate).

This sequence belongs to the bZIP family. CNC subfamily. As to quaternary structure, homodimer; can bind DNA as a homodimer. Erythroid transcription activator nuclear factor erythroid-derived 2 (NF-E2), composed of a heterodimer of NFE2 and MAFK, possesses transactivation activity on beta-globin. Also forms high affinity heterodimer with MAFG; the interaction promotes erythropoiesis. Interacts (via the PXY motif 1) with ITCH (via the WW 1 domain); the interaction promotes 'Lys63'-linked ubiquitination of NFE2, translocates it to the cytoplasm and inhibits its transactivation activity. Interacts with KMT2D/MLL2; the interaction promotes transactivation of the beta-globin locus. Interacts with MAPK8 (phosphorylated form); the interaction leads to phosphorylation of NFE2 in undifferentiated cells. Phosphorylated on serine residues. In undifferentiated erythrocytes, phosphorylated by MAPK8 which then leads to ubiquitination and protein degradation. Post-translationally, sumoylated. Sumoylation is required for translocation to nuclear bodies PODs, anchoring to the gene loci, and transactivation of the beta-globin gene. In terms of processing, ubiquitinated mainly by 'Lys63'-linked ubiquitin. Polyubiquitination with 'Lys63'-linked ubiquitin by ITCH retains NFE2 in the cytoplasm preventing its transactivation activity. In undifferentiated erythrocyte, ubiquitinated after MAPK8-mediatd phosphorylation leading to protein degradation.

Its subcellular location is the nucleus. The protein resides in the PML body. It is found in the cytoplasm. Component of the NF-E2 complex essential for regulating erythroid and megakaryocytic maturation and differentiation. Binds to the hypersensitive site 2 (HS2) of the beta-globin control region (LCR). This subunit (NFE2) recognizes the TCAT/C sequence of the AP-1-like core palindrome present in a number of erythroid and megakaryocytic gene promoters. Requires MAFK or other small MAF proteins for binding to the NF-E2 motif. May play a role in all aspects of hemoglobin production from globin and heme synthesis to procurement of iron. In Rattus norvegicus (Rat), this protein is Transcription factor NF-E2 45 kDa subunit (Nfe2).